Here is a 162-residue protein sequence, read N- to C-terminus: Thy-1 membrane glycoprotein (162 aa).

Residues 1 to 19 (MNPAISVALLLSVLQVSRG) form the signal peptide. Gln20 bears the Pyrrolidone carboxylic acid mark. An Ig-like V-type domain is found at 20–127 (QKVTSLTACL…NKSISVYRDK (108 aa)). Intrachain disulfides connect Cys28-Cys131 and Cys38-Cys105. N-linked (GlcNAc...) asparagine glycans are attached at residues Asn42, Asn94, and Asn118. Cys131 is lipidated: GPI-anchor amidated cysteine; alternate. Positions 132 to 162 (GGISLLVQNTSWMLLLLLSLSLLQALDFISL) are cleaved as a propeptide — removed in mature form.

It localises to the cell membrane. May play a role in cell-cell or cell-ligand interactions during synaptogenesis and other events in the brain. The protein is Thy-1 membrane glycoprotein (Thy1) of Mus musculus (Mouse).